A 215-amino-acid chain; its full sequence is Pyrrolidone-carboxylate peptidase (215 aa).

Catalysis depends on residues Glu-81, Cys-144, and His-168.

It belongs to the peptidase C15 family. Homotetramer.

It is found in the cytoplasm. The catalysed reaction is Release of an N-terminal pyroglutamyl group from a polypeptide, the second amino acid generally not being Pro.. Removes 5-oxoproline from various penultimate amino acid residues except L-proline. This is Pyrrolidone-carboxylate peptidase (pcp) from Bacillus amyloliquefaciens (Bacillus velezensis).